Reading from the N-terminus, the 385-residue chain is UPF0744 protein YSD83 (385 aa).

This sequence belongs to the UPF0744 family.

In Saccharomyces paradoxus (Yeast), this protein is UPF0744 protein YSD83 (YSD83).